The chain runs to 224 residues: N6-methyladenosine RNA demethylase ALKBH (224 aa).

A Fe2OG dioxygenase domain is found at 93–222 (LAQAAIVNFY…RINLNVRQMR (130 aa)). Fe cation contacts are provided by H111, D113, and H178. R213 lines the 2-oxoglutarate pocket.

It belongs to the alkB family. Fe(2+) serves as cofactor.

It carries out the reaction an N(6)-methyladenosine in mRNA + 2-oxoglutarate + O2 = an adenosine in mRNA + formaldehyde + succinate + CO2. RNA demethylase that regulates the stability of mRNAs through an m(6)A-dependent manner. M6A is a modification present at internal sites of mRNAs and some non-coding RNAs and plays a role in mRNA stability and processing. Demethylate m6A at position A1935 within the 3'UTR of transcription factor ZAP1 and plays an important role in C.parasitica development and virulence. Target mRNAs are primarily associated with amino-acid biosynthesis, 2-oxocarboxylic acid metabolism, and ABC transporters, as well as alpha-amino acid metabolism, small-molecule biosynthesis, and the sulfite reductase complex (NADPH). This is N6-methyladenosine RNA demethylase ALKBH from Cryphonectria parasitica (strain ATCC 38755 / EP155).